Reading from the N-terminus, the 1450-residue chain is Protein TIC 214 (1450 aa).

6 helical membrane passes run 29 to 49 (FGLY…IVVI), 61 to 81 (VMAF…IYYT), 86 to 106 (LFIK…FYWQ), 132 to 152 (FFDS…PIFF), 166 to 186 (LNFF…FFNA), and 213 to 233 (IIPI…HIPF).

The protein belongs to the TIC214 family. As to quaternary structure, part of the Tic complex.

The protein resides in the plastid. It localises to the chloroplast inner membrane. Its function is as follows. Involved in protein precursor import into chloroplasts. May be part of an intermediate translocation complex acting as a protein-conducting channel at the inner envelope. The protein is Protein TIC 214 of Chaetosphaeridium globosum (Charophycean green alga).